A 96-amino-acid polypeptide reads, in one-letter code: Large ribosomal subunit protein uL23 (96 aa).

It belongs to the universal ribosomal protein uL23 family. In terms of assembly, part of the 50S ribosomal subunit. Contacts protein L29, and trigger factor when it is bound to the ribosome.

One of the early assembly proteins it binds 23S rRNA. One of the proteins that surrounds the polypeptide exit tunnel on the outside of the ribosome. Forms the main docking site for trigger factor binding to the ribosome. This is Large ribosomal subunit protein uL23 from Nitratidesulfovibrio vulgaris (strain DSM 19637 / Miyazaki F) (Desulfovibrio vulgaris).